A 183-amino-acid polypeptide reads, in one-letter code: Adenine phosphoribosyltransferase (183 aa).

This sequence belongs to the purine/pyrimidine phosphoribosyltransferase family. Homodimer.

It is found in the cytoplasm. It carries out the reaction AMP + diphosphate = 5-phospho-alpha-D-ribose 1-diphosphate + adenine. It functions in the pathway purine metabolism; AMP biosynthesis via salvage pathway; AMP from adenine: step 1/1. Functionally, catalyzes a salvage reaction resulting in the formation of AMP, that is energically less costly than de novo synthesis. This is Adenine phosphoribosyltransferase from Salmonella typhi.